Consider the following 190-residue polypeptide: Peptidyl-tRNA hydrolase (190 aa).

Tyr-14 contributes to the tRNA binding site. The active-site Proton acceptor is His-19. TRNA-binding residues include Tyr-64, Asn-66, and Asn-112.

The protein belongs to the PTH family. As to quaternary structure, monomer.

It localises to the cytoplasm. It catalyses the reaction an N-acyl-L-alpha-aminoacyl-tRNA + H2O = an N-acyl-L-amino acid + a tRNA + H(+). In terms of biological role, hydrolyzes ribosome-free peptidyl-tRNAs (with 1 or more amino acids incorporated), which drop off the ribosome during protein synthesis, or as a result of ribosome stalling. Its function is as follows. Catalyzes the release of premature peptidyl moieties from peptidyl-tRNA molecules trapped in stalled 50S ribosomal subunits, and thus maintains levels of free tRNAs and 50S ribosomes. This is Peptidyl-tRNA hydrolase from Chlorobaculum parvum (strain DSM 263 / NCIMB 8327) (Chlorobium vibrioforme subsp. thiosulfatophilum).